The sequence spans 478 residues: Lipoprotein lipase (478 aa).

The N-terminal stretch at 1–27 is a signal peptide; the sequence is MESKALLLVALSVWLQSLIVSREGLAT. Residues 35–56 are interaction with GPIHBP1; it reads RDFTDIESKFALRTPEDTVEDT. A disulfide bond links cysteine 57 and cysteine 70. A glycan (N-linked (GlcNAc...) asparagine) is linked at asparagine 73. Tyrosine 124 carries the post-translational modification 3'-nitrotyrosine. The active-site Nucleophile is the serine 162. The active-site Charge relay system is the aspartate 186. At tyrosine 194 the chain carries 3'-nitrotyrosine. Alanine 197, arginine 200, serine 202, and aspartate 205 together coordinate Ca(2+). An intrachain disulfide couples cysteine 246 to cysteine 269. The essential for determining substrate specificity stretch occupies residues 246–269; it reads CNIGEAIRVIAERGLGDVDQLVKC. Histidine 271 functions as the Charge relay system in the catalytic mechanism. 2 cysteine pairs are disulfide-bonded: cysteine 294–cysteine 313 and cysteine 305–cysteine 308. Positions 344–467 constitute a PLAT domain; the sequence is FHYQVKMRFS…KGKSSVVFVK (124 aa). Tyrosine 346 bears the 3'-nitrotyrosine mark. Asparagine 389 carries N-linked (GlcNAc...) asparagine glycosylation. The important for interaction with lipoprotein particles stretch occupies residues 420 to 424; sequence WSNWW. Residues 433–437 are important for heparin binding; it reads KIRVK. The tract at residues 446-470 is interaction with GPIHBP1; sequence IFCSREKKSHLQKGKSSVVFVKCHD. An intrachain disulfide couples cysteine 448 to cysteine 468.

It belongs to the AB hydrolase superfamily. Lipase family. In terms of assembly, homodimer. Interacts with GPIHBP1 with 1:1 stoichiometry. Interacts with APOC2; the interaction activates LPL activity in the presence of lipids. Interaction with heparan sulfate proteoglycans is required to protect LPL against loss of activity. Associates with lipoprotein particles in blood plasma. Interacts with LMF1 and SEL1L; interaction with SEL1L is required to prevent aggregation of newly synthesized LPL in the endoplasmic reticulum (ER), and for normal export of LPL from the ER to the extracellular space. Interacts with SORL1; SORL1 acts as a sorting receptor, promoting LPL localization to endosomes and later to lysosomes, leading to degradation of newly synthesized LPL. In terms of processing, tyrosine nitration after lipopolysaccharide (LPS) challenge down-regulates the lipase activity.

Its subcellular location is the cell membrane. The protein resides in the secreted. The protein localises to the extracellular space. It localises to the extracellular matrix. It catalyses the reaction a triacylglycerol + H2O = a diacylglycerol + a fatty acid + H(+). The enzyme catalyses a 1,2-diacyl-sn-glycero-3-phosphocholine + H2O = a 2-acyl-sn-glycero-3-phosphocholine + a fatty acid + H(+). It carries out the reaction 1,2,3-tri-(9Z-octadecenoyl)-glycerol + H2O = di-(9Z)-octadecenoylglycerol + (9Z)-octadecenoate + H(+). The catalysed reaction is 1,2-di-(9Z-octadecenoyl)-sn-glycero-3-phosphocholine + H2O = (9Z-octadecenoyl)-sn-glycero-3-phosphocholine + (9Z)-octadecenoate + H(+). It catalyses the reaction 1,2,3-tributanoylglycerol + H2O = dibutanoylglycerol + butanoate + H(+). The enzyme catalyses 1,2-dihexadecanoyl-sn-glycero-3-phosphocholine + H2O = hexadecanoyl-sn-glycero-3-phosphocholine + hexadecanoate + H(+). With respect to regulation, the apolipoprotein APOC2 acts as a coactivator of LPL activity. Ca(2+) binding promotes protein stability and formation of the active homodimer. Interaction with GPIHBP1 protects LPL against inactivation by ANGPTL4. In terms of biological role, key enzyme in triglyceride metabolism. Catalyzes the hydrolysis of triglycerides from circulating chylomicrons and very low density lipoproteins (VLDL), and thereby plays an important role in lipid clearance from the blood stream, lipid utilization and storage. Although it has both phospholipase and triglyceride lipase activities it is primarily a triglyceride lipase with low but detectable phospholipase activity. Mediates margination of triglyceride-rich lipoprotein particles in capillaries. Recruited to its site of action on the luminal surface of vascular endothelium by binding to GPIHBP1 and cell surface heparan sulfate proteoglycans. The chain is Lipoprotein lipase (LPL) from Sus scrofa (Pig).